The sequence spans 382 residues: Protein phosphatase 1A (382 aa).

Gly2 carries N-myristoyl glycine lipidation. The PPM-type phosphatase domain occupies Arg23–Phe291. Positions 60, 61, 239, and 282 each coordinate Mn(2+). 2 positions are modified to phosphoserine: Ser375 and Ser377.

This sequence belongs to the PP2C family. In terms of assembly, monomer. Interacts with SMAD2; the interaction dephosphorylates SMAD2 in its C-terminal SXS motif resulting in disruption of the SMAD2/SMAD4 complex, SMAD2 nuclear export and termination of the TGF-beta-mediated signaling. Interacts with SMAD2; the interaction dephosphorylates SMAD2 in its C-terminal SXS motif resulting in disruption of the SMAD2/SMAD4 complex, SMAD2 nuclear export and termination of the TGF-beta-mediated signaling. Interacts with the phosphorylated form of IKBKB/IKKB. The cofactor is Mg(2+). Requires Mn(2+) as cofactor. In terms of processing, N-myristoylation is essential for the recognition of its substrates for dephosphorylation.

Its subcellular location is the nucleus. It localises to the cytoplasm. It is found in the cytosol. The protein localises to the membrane. It carries out the reaction O-phospho-L-seryl-[protein] + H2O = L-seryl-[protein] + phosphate. The enzyme catalyses O-phospho-L-threonyl-[protein] + H2O = L-threonyl-[protein] + phosphate. Functionally, enzyme with a broad specificity. Negatively regulates TGF-beta signaling through dephosphorylating SMAD2 and SMAD3, resulting in their dissociation from SMAD4, nuclear export of the SMADs and termination of the TGF-beta-mediated signaling. Dephosphorylates PRKAA1 and PRKAA2. Plays an important role in the termination of TNF-alpha-mediated NF-kappa-B activation through dephosphorylating and inactivating IKBKB/IKKB. The chain is Protein phosphatase 1A (Ppm1a) from Mus musculus (Mouse).